Consider the following 424-residue polypeptide: Tubulin gamma chain, nucleomorph (424 aa).

137 to 143 (NGGTGAG) contacts GTP.

This sequence belongs to the tubulin family.

Functionally, tubulin is the major constituent of microtubules. The gamma chain is found at microtubule organizing centers (MTOC) such as the spindle poles or the centrosome, suggesting that it is involved in the minus-end nucleation of microtubule assembly. In Guillardia theta (Cryptophyte), this protein is Tubulin gamma chain, nucleomorph (tubG).